We begin with the raw amino-acid sequence, 270 residues long: Glutamate 5-kinase (270 aa).

ATP is bound at residue lysine 18. Substrate is bound by residues serine 54, aspartate 141, and asparagine 153. 173–174 is a binding site for ATP; the sequence is SD.

Belongs to the glutamate 5-kinase family.

Its subcellular location is the cytoplasm. It carries out the reaction L-glutamate + ATP = L-glutamyl 5-phosphate + ADP. It participates in amino-acid biosynthesis; L-proline biosynthesis; L-glutamate 5-semialdehyde from L-glutamate: step 1/2. Functionally, catalyzes the transfer of a phosphate group to glutamate to form L-glutamate 5-phosphate. The sequence is that of Glutamate 5-kinase from Leifsonia xyli subsp. xyli (strain CTCB07).